Consider the following 186-residue polypeptide: UPF0301 protein Swoo_1337 (186 aa).

It belongs to the UPF0301 (AlgH) family.

The protein is UPF0301 protein Swoo_1337 of Shewanella woodyi (strain ATCC 51908 / MS32).